The sequence spans 348 residues: Inosamine-phosphate amidinotransferase 1 (348 aa).

Catalysis depends on residues D179 and H227. C332 (amidino-cysteine intermediate) is an active-site residue.

It belongs to the amidinotransferase family. In terms of assembly, homodimer.

It carries out the reaction 1-amino-1-deoxy-scyllo-inositol 4-phosphate + L-arginine = 1-guanidino-1-deoxy-scyllo-inositol 4-phosphate + L-ornithine. It functions in the pathway antibiotic biosynthesis; streptomycin biosynthesis. In terms of biological role, catalyzes two non-consecutive transamidination reactions. It converts scyllo-inosamine 4-phosphate into N-amidino-scyllo-inosamine 4-phosphate and N1-amidinostreptamine 6-phosphate into streptidine 6-phosphate. This is Inosamine-phosphate amidinotransferase 1 (strB1) from Streptomyces glaucescens.